Consider the following 317-residue polypeptide: Ribosomal protein L11 methyltransferase (317 aa).

Residues threonine 158, glycine 179, aspartate 201, and asparagine 244 each contribute to the S-adenosyl-L-methionine site.

The protein belongs to the methyltransferase superfamily. PrmA family.

It localises to the cytoplasm. It catalyses the reaction L-lysyl-[protein] + 3 S-adenosyl-L-methionine = N(6),N(6),N(6)-trimethyl-L-lysyl-[protein] + 3 S-adenosyl-L-homocysteine + 3 H(+). Its function is as follows. Methylates ribosomal protein L11. The protein is Ribosomal protein L11 methyltransferase of Streptococcus pyogenes serotype M12 (strain MGAS2096).